Consider the following 130-residue polypeptide: Aspartate 1-decarboxylase (130 aa).

Ser-25 serves as the catalytic Schiff-base intermediate with substrate; via pyruvic acid. Residue Ser-25 is modified to Pyruvic acid (Ser). A substrate-binding site is contributed by Thr-57. Tyr-58 functions as the Proton donor in the catalytic mechanism. 73–75 (GAT) is a binding site for substrate.

It belongs to the PanD family. Heterooctamer of four alpha and four beta subunits. It depends on pyruvate as a cofactor. Is synthesized initially as an inactive proenzyme, which is activated by self-cleavage at a specific serine bond to produce a beta-subunit with a hydroxyl group at its C-terminus and an alpha-subunit with a pyruvoyl group at its N-terminus.

The protein localises to the cytoplasm. It catalyses the reaction L-aspartate + H(+) = beta-alanine + CO2. The protein operates within cofactor biosynthesis; (R)-pantothenate biosynthesis; beta-alanine from L-aspartate: step 1/1. In terms of biological role, catalyzes the pyruvoyl-dependent decarboxylation of aspartate to produce beta-alanine. This chain is Aspartate 1-decarboxylase, found in Lactiplantibacillus plantarum (strain ATCC BAA-793 / NCIMB 8826 / WCFS1) (Lactobacillus plantarum).